The sequence spans 600 residues: Putative heme-binding protein NP_2262A (600 aa).

His-180 contacts heme. Positions 261–289 (TSETGHGGADSQTSSESSGGRPSTDPSHD) are disordered. Residues 270–285 (DSQTSSESSGGRPSTD) are compositionally biased toward polar residues. One can recognise an ABM domain in the interval 510–598 (GTMGMFYTVK…VLADRPRHVF (89 aa)).

The protein in the N-terminal section; belongs to the ChdC family.

The polypeptide is Putative heme-binding protein NP_2262A (Natronomonas pharaonis (strain ATCC 35678 / DSM 2160 / CIP 103997 / JCM 8858 / NBRC 14720 / NCIMB 2260 / Gabara) (Halobacterium pharaonis)).